A 338-amino-acid polypeptide reads, in one-letter code: Lipoate-protein ligase A (338 aa).

The region spanning 29–216 is the BPL/LPL catalytic domain; that stretch reads SPNQRVLFLW…AFFAYYDEQV (188 aa). ATP is bound by residues R71, 76-79, and K134; that span reads GAVF. K134 contacts (R)-lipoate.

Belongs to the LplA family. Monomer.

The protein resides in the cytoplasm. The catalysed reaction is L-lysyl-[lipoyl-carrier protein] + (R)-lipoate + ATP = N(6)-[(R)-lipoyl]-L-lysyl-[lipoyl-carrier protein] + AMP + diphosphate + H(+). It functions in the pathway protein modification; protein lipoylation via exogenous pathway; protein N(6)-(lipoyl)lysine from lipoate: step 1/2. Its pathway is protein modification; protein lipoylation via exogenous pathway; protein N(6)-(lipoyl)lysine from lipoate: step 2/2. Its function is as follows. Catalyzes both the ATP-dependent activation of exogenously supplied lipoate to lipoyl-AMP and the transfer of the activated lipoyl onto the lipoyl domains of lipoate-dependent enzymes. This Yersinia pseudotuberculosis serotype O:1b (strain IP 31758) protein is Lipoate-protein ligase A.